The chain runs to 627 residues: MNEMENTDPVLQDDLVSKYERELSTEQEEDTPVILTQLNEDGTTSNYFDKRKLKIAPRSTLQFKVGPPFELVRDYCPVVESHTGRTLDLRIIPRIDRGFDHIDEEWVGYKRNYFTLVSTFETANCDLDTFLKSSFDLLVEDSSVESRLRVQYFAIKIKAKNDDDDTEINLVQHTAKRDKGPQFCPSVCPLVPSPLPKHQIIREASNVRNITKMKKYDSTFYLHRDHVNYEEYGVDSLLFSYPEDSIQKVARYERVQFASSISVKKPSQQNKHFSLHVILGAVVDPDTFHGENPGIPYDELALKNGSKGMFVYLQEMKTPPLIIRGRSPSNYASSQRITVRTPSSVNSSQNSTKRKMPSMAQPLNESCLNARPSKRRSKVALGAPNSGASISPIKSRQSTPMEASKENEDPFFRPNKRVETLEHIQNKLGALKNQCPDSSLKYPSSSSRGMEGCLEKEDLVYSSSFSVNMKQIELKPARSFEHENIFKVGSLAFKKINELPHENYDITIEKKSMEQNYLRPEIGSRSECKTSYGNELSLSNISFSILPNSAENFHLETALFPATEEDVPRTFSRILETGSFQNYYQKMDAENADRVYSKGVKLIASGTLPSGIFNREELFEEDSFYKY.

Positions 28-335 form a DNA-binding region, NDT80; the sequence is EEDTPVILTQ…RSPSNYASSQ (308 aa). Residues 324-410 are disordered; it reads RGRSPSNYAS…MEASKENEDP (87 aa). 2 stretches are compositionally biased toward polar residues: residues 327 to 351 and 386 to 401; these read SPSN…SQNS and SGAS…STPM.

As to quaternary structure, binds to DNA as a monomer. Post-translationally, phosphorylated by pachytene checkpoint kinase IME2, but also phosphorylated in an IME2-independent manner. Phosphorylation probably eliminates SUM1-mediated repression and is also required for full transcriptional activation activity. Phosphorylation of the DNA-binding domain by IME2 does not alter DNA binding affinity.

Its subcellular location is the nucleus. Transcription factor required for successful completion of meiosis and spore formation. Gets activated after completion of meiotic recombination at the end of prophase I. Recognizes and binds to the middle sporulation element (MSE) 5'-C[AG]CAAA[AT]-3' in the promoter region of stage-specific genes that are required for progression through meiosis and sporulation. Competes for binding to MSE with the transcriptional repressor SUM1, which represses middle sporulation-specific genes during mitosis and early sporulation. This is Meiosis-specific transcription factor NDT80 (NDT80) from Saccharomyces cerevisiae (strain ATCC 204508 / S288c) (Baker's yeast).